The following is a 94-amino-acid chain: MNRGIRTITRHFNKLNNLNFSSKYTPTFKTTPINSLPTFTKPNDSNNNVNKSSNDGVNNNIITSTIMRTIGFDQFLLCVINDDDDEQTLIYQNF.

The span at 33 to 42 (INSLPTFTKP) shows a compositional bias: polar residues. The tract at residues 33–57 (INSLPTFTKPNDSNNNVNKSSNDGV) is disordered. The span at 43–57 (NDSNNNVNKSSNDGV) shows a compositional bias: low complexity.

This is an uncharacterized protein from Dictyostelium discoideum (Social amoeba).